The sequence spans 388 residues: Dual-specificity RNA methyltransferase RlmN (388 aa).

The active-site Proton acceptor is the Glu109. Residues 115-354 form the Radical SAM core domain; it reads EEDRATLCVS…TIVRKTRGDD (240 aa). An intrachain disulfide couples Cys122 to Cys359. [4Fe-4S] cluster contacts are provided by Cys129, Cys133, and Cys136. Residues 183 to 184, Ser215, 237 to 239, and Asn316 contribute to the S-adenosyl-L-methionine site; these read GE and SLH. The active-site S-methylcysteine intermediate is the Cys359.

This sequence belongs to the radical SAM superfamily. RlmN family. Requires [4Fe-4S] cluster as cofactor.

The protein localises to the cytoplasm. It catalyses the reaction adenosine(2503) in 23S rRNA + 2 reduced [2Fe-2S]-[ferredoxin] + 2 S-adenosyl-L-methionine = 2-methyladenosine(2503) in 23S rRNA + 5'-deoxyadenosine + L-methionine + 2 oxidized [2Fe-2S]-[ferredoxin] + S-adenosyl-L-homocysteine. It carries out the reaction adenosine(37) in tRNA + 2 reduced [2Fe-2S]-[ferredoxin] + 2 S-adenosyl-L-methionine = 2-methyladenosine(37) in tRNA + 5'-deoxyadenosine + L-methionine + 2 oxidized [2Fe-2S]-[ferredoxin] + S-adenosyl-L-homocysteine. In terms of biological role, specifically methylates position 2 of adenine 2503 in 23S rRNA and position 2 of adenine 37 in tRNAs. m2A2503 modification seems to play a crucial role in the proofreading step occurring at the peptidyl transferase center and thus would serve to optimize ribosomal fidelity. In Klebsiella pneumoniae subsp. pneumoniae (strain ATCC 700721 / MGH 78578), this protein is Dual-specificity RNA methyltransferase RlmN.